Here is a 527-residue protein sequence, read N- to C-terminus: MAEPTQPLLTDSNSSSPRSLDDTIESYIGSFGWAQFLQAALVSFSGVFDAQQTFISVFTDSEPTWHCTDSNSICHESISNICILPKTAWSWDYSPHVSVISEWGLQCAGSFVKGLPESSFFVGCLIGGLVLSTLADSSLGRKNMLFLSCLVMAISTMLTVFSPNIWVYAVLRFVNGFGRATIGTCALVLSTELVGKKWRGRVGIMSFFGFMLGFLSLPLMAYMNRGSSWRILYAWTSIPTIIYCVLVRFFVCESPRWLFVRGRREEAISILKRVASIPSTDVSSGGAISMSFSSLPFEEDEEKPSTNVNIFTTMKVLVEKRWALKRLSAVMAIAFGIGLVYYGMPLALSNLDFNIYLSAAFNALMDLPANLITLFLVDKLSRRNALIGFTALGGVSSVLIFALHNMRIGNHGALQLALELISYFSACSAFNMEMIYTIELFPTCVRNSAIAMARQALVLGGVFSPIMVAAGRKNAFWSFGLFGLAIGLLGLFAVGLPETRGSDLCDTMDEEECKDRRSKVAVNNVIA.

At M1 to Y27 the chain is on the cytoplasmic side. A helical membrane pass occupies residues I28–F48. At D49–S119 the chain is on the extracellular side. The chain crosses the membrane as a helical span at residues F120 to G140. Residues R141–C149 are Cytoplasmic-facing. The helical transmembrane segment at L150–V170 threads the bilayer. At L171–G176 the chain is on the extracellular side. A helical membrane pass occupies residues F177 to G195. S190 to K197 contacts ATP. Residues K196 to R201 lie on the Cytoplasmic side of the membrane. Residues V202 to Y222 traverse the membrane as a helical segment. Over M223–R230 the chain is Extracellular. A helical transmembrane segment spans residues I231–V251. Topologically, residues C252–R326 are cytoplasmic. The helical transmembrane segment at L327–A347 threads the bilayer. Residues L348–Y356 lie on the Extracellular side of the membrane. A helical transmembrane segment spans residues L357–V377. Residues D378 to A385 are Cytoplasmic-facing. A helical membrane pass occupies residues L386 to M406. The Extracellular segment spans residues R407–Q415. Residues L416–Y436 form a helical membrane-spanning segment. Residues T437–S448 are Cytoplasmic-facing. The helical transmembrane segment at A449–A469 threads the bilayer. The Extracellular segment spans residues A470 to A475. A helical membrane pass occupies residues F476–L496. Residues P497–A527 lie on the Cytoplasmic side of the membrane.

This sequence belongs to the major facilitator (TC 2.A.1) superfamily. Organic cation transporter (TC 2.A.1.19) family. In terms of tissue distribution, weakly expressed in roots, including tips and initiation site of lateral roots, siliques and flowers, especially in pollen and stigma.

It is found in the vacuole membrane. High affinity carnitine transporter involved in the active cellular uptake of carnitine. Also transports organic cations. This is Organic cation/carnitine transporter 2 (OCT2) from Arabidopsis thaliana (Mouse-ear cress).